We begin with the raw amino-acid sequence, 266 residues long: Beta-lactamase OXA-10 (266 aa).

Positions M1–A19 are cleaved as a signal peptide. C44 and C51 form a disulfide bridge. Catalysis depends on S67, which acts as the Acyl-ester intermediate. K70 is modified (N6-carboxylysine). A beta-lactam contacts are provided by S115, T206, F208, and R250.

The protein belongs to the class-D beta-lactamase family. As to quaternary structure, dimer.

Its subcellular location is the periplasm. It catalyses the reaction a beta-lactam + H2O = a substituted beta-amino acid. Activated, with respect to most beta-lactam substrates, in the presence of 0.05 M sodium bicarbonate. Its function is as follows. Class D beta-lactamase which confers resistance to the beta-lactam antibiotics, including penicillin, carbenicillin and oxacillin, and also some cephalosporins. Confers weak resistance to some carbapenems, in E.coli strain C600Z1. Acts via hydrolysis of the beta-lactam ring. Has penicillin- and cephalosporin-hydrolyzing activities. This is Beta-lactamase OXA-10 from Pseudomonas aeruginosa.